Reading from the N-terminus, the 238-residue chain is MSELKYKRALIKLSGEALAGDKKFGIDPETVSNICREIAEVLEMGLQVSLVIGGGNIFRGLSSSAKGMDRSSADYMGMLATVLNAVAVQDALEKLGHATRVLSAITMQEVCEPYIRRRAERHLEKGRVVICAAGTGNPYFTTDTAAALRGMELKCDVIIKATKVDGVYDKDPMQHDDAVMYRQLSYIEVLQKNLRVMDSTAISLCMENNVPIIVCNMYKGGIKRAVMGEDVGTIVQGG.

Lys12–Gly15 provides a ligand contact to ATP. Gly54 is a binding site for UMP. ATP contacts are provided by Gly55 and Arg59. UMP is bound by residues Asp74 and Thr135–Thr142. 3 residues coordinate ATP: Thr162, Tyr168, and Asp171.

This sequence belongs to the UMP kinase family. As to quaternary structure, homohexamer.

Its subcellular location is the cytoplasm. The enzyme catalyses UMP + ATP = UDP + ADP. Its pathway is pyrimidine metabolism; CTP biosynthesis via de novo pathway; UDP from UMP (UMPK route): step 1/1. With respect to regulation, inhibited by UTP. Its function is as follows. Catalyzes the reversible phosphorylation of UMP to UDP. This chain is Uridylate kinase, found in Oleidesulfovibrio alaskensis (strain ATCC BAA-1058 / DSM 17464 / G20) (Desulfovibrio alaskensis).